A 1203-amino-acid polypeptide reads, in one-letter code: MIDVNNFEYMKIGLASPDKIRSWSYGEVKKPETINYRTLKPEKDGLFCERIFGPQKDWECHCGKYKRVRYKGVVCDRCGVEVTRAKVRRERMGHIELAAPVSHIWYFKGIPSRMGLVLDMSPRALEEVIYFASYVVTESGDTPLDKKQLLSEKEYRAYRDRYGSTFQAAMGAEAIKKLLQDIDLDKEVDFLKEELKTAQGQRRTRAIKRLEVLEAFRNSGNEPSWMILDVLPVIPPELRPMVQLDGGRFATSDLNDLYRRVINRNNRLKRLLDLGAPSIIVQNEKRMLQEAVDALIDNGRRGRPVTGPGNRPLKSLSHMLKGKQGRFRQNLLGKRVDYSGRSVIVVGPNLKMYQCGLPKEMALELFKPFVMKELVEKGLAHNIKSAKRKIERVQPEVWDVLESVIKEHPVLLNRAPTLHRLGIQAFEPTLVEGRAIRLHPLVCTAYNADFDGDQMAVHVPLSSEAQAEARLLMLAAQNILNPKDGKPVVTPSQDMVLGNYYLTLEREGAIGEGMVFKDANEALLAYQNGYVHLHTRVAVAASAVNNATFTEEQKSMLLLTTVGKLIFNEILPESFPYINEPTNSNLEKETPAKYFVEKGANIKEIIASREEVAPFSKKILGNIIAEVFKRFKITETSRMLDRMKNLGFKYSTKAGITVGVSDILVLGEKDEILHEAQAKVDNVIKQFRRGLITEEERYDRVISIWSNAKDVIQGKLMKSLNKRNPIFMMSDSGARGNASNFTQLAGMRGLMANPSGRIIELPIKSSFREGLTVLEYFISTHGARKGLADTALKTADSGYLTRRLVDVAQDVIVREDDCGTDRGLLIGAIKEGNEVIESLYDRLVGRFARKTVKHPETGEVLVAENQLITEDIAHIVENSGVETVNIRSAFTCNTRHGVCKKCYGRNLATGTDVEVGEAVGIIAAQSIGEPGTQLTMRTFHTGGVAGDDITQGLPRIQEIFEARNPKGQAVISEIDGVIAAINDVKDRQEVVVQGEVETRTYAIPYGARLKVIPGQQISHGKELTEGSIDPKELLKVTDITAVQEYLLREVQKVYRMQGVEIGDKHVEVMVRQMLRKVRVSDAGETDVLPGTLLDIHQFTDANAKVLLQGKQPATARPVLLGITKASLETDSFLSAASFQETTRVLTDAAIKGKRDELLGLKENVIIGKLVPAGTGMNRYRKVDLVKTTQDDMNVENDEVYVEQ.

Residues Cys60, Cys62, Cys75, and Cys78 each contribute to the Zn(2+) site. 3 residues coordinate Mg(2+): Asp449, Asp451, and Asp453. Positions 818, 892, 899, and 902 each coordinate Zn(2+).

Belongs to the RNA polymerase beta' chain family. As to quaternary structure, the RNAP catalytic core consists of 2 alpha, 1 beta, 1 beta' and 1 omega subunit. When a sigma factor is associated with the core the holoenzyme is formed, which can initiate transcription. The cofactor is Mg(2+). Zn(2+) serves as cofactor.

It carries out the reaction RNA(n) + a ribonucleoside 5'-triphosphate = RNA(n+1) + diphosphate. In terms of biological role, DNA-dependent RNA polymerase catalyzes the transcription of DNA into RNA using the four ribonucleoside triphosphates as substrates. The sequence is that of DNA-directed RNA polymerase subunit beta' from Bacillus cereus (strain ATCC 10987 / NRS 248).